Reading from the N-terminus, the 79-residue chain is UPF0291 protein lp_2062 (79 aa).

The protein belongs to the UPF0291 family.

The protein localises to the cytoplasm. The sequence is that of UPF0291 protein lp_2062 from Lactiplantibacillus plantarum (strain ATCC BAA-793 / NCIMB 8826 / WCFS1) (Lactobacillus plantarum).